Consider the following 418-residue polypeptide: Gamma-glutamyl phosphate reductase (418 aa).

This sequence belongs to the gamma-glutamyl phosphate reductase family.

The protein resides in the cytoplasm. The enzyme catalyses L-glutamate 5-semialdehyde + phosphate + NADP(+) = L-glutamyl 5-phosphate + NADPH + H(+). The protein operates within amino-acid biosynthesis; L-proline biosynthesis; L-glutamate 5-semialdehyde from L-glutamate: step 2/2. Functionally, catalyzes the NADPH-dependent reduction of L-glutamate 5-phosphate into L-glutamate 5-semialdehyde and phosphate. The product spontaneously undergoes cyclization to form 1-pyrroline-5-carboxylate. The chain is Gamma-glutamyl phosphate reductase from Geobacter sp. (strain M21).